Reading from the N-terminus, the 239-residue chain is Carboxy-S-adenosyl-L-methionine synthase (239 aa).

S-adenosyl-L-methionine-binding positions include Tyr-35, 64-66, 88-89, and Arg-195; these read GCS and DN.

The protein belongs to the class I-like SAM-binding methyltransferase superfamily. Cx-SAM synthase family. As to quaternary structure, homodimer.

The enzyme catalyses prephenate + S-adenosyl-L-methionine = carboxy-S-adenosyl-L-methionine + 3-phenylpyruvate + H2O. Functionally, catalyzes the conversion of S-adenosyl-L-methionine (SAM) to carboxy-S-adenosyl-L-methionine (Cx-SAM). The chain is Carboxy-S-adenosyl-L-methionine synthase from Helicobacter pylori (strain HPAG1).